The sequence spans 74 residues: UPF0435 protein BAA_0470 (74 aa).

This sequence belongs to the UPF0435 family.

This Bacillus anthracis (strain A0248) protein is UPF0435 protein BAA_0470.